Here is a 239-residue protein sequence, read N- to C-terminus: Fatty acid metabolism regulator protein (239 aa).

The HTH gntR-type domain maps to 6–74 (QSPAGFAEEY…HGKPTKVNNF (69 aa)). The H-T-H motif DNA-binding region spans 34–53 (ERELSELIGVTRTTLREVLQ).

Homodimer.

The protein localises to the cytoplasm. Multifunctional regulator of fatty acid metabolism. The sequence is that of Fatty acid metabolism regulator protein from Shigella flexneri.